The chain runs to 355 residues: Uroporphyrinogen decarboxylase (355 aa).

Substrate is bound by residues 27 to 31 (RQAGR), aspartate 77, tyrosine 154, threonine 209, and histidine 328.

It belongs to the uroporphyrinogen decarboxylase family. As to quaternary structure, homodimer.

It localises to the cytoplasm. It carries out the reaction uroporphyrinogen III + 4 H(+) = coproporphyrinogen III + 4 CO2. Its pathway is porphyrin-containing compound metabolism; protoporphyrin-IX biosynthesis; coproporphyrinogen-III from 5-aminolevulinate: step 4/4. Catalyzes the decarboxylation of four acetate groups of uroporphyrinogen-III to yield coproporphyrinogen-III. The chain is Uroporphyrinogen decarboxylase from Dechloromonas aromatica (strain RCB).